The chain runs to 105 residues: Nitrogenase-stabilizing/protective protein NifW 1 (105 aa).

The protein belongs to the NifW family. As to quaternary structure, homotrimer; associates with NifD.

Functionally, may protect the nitrogenase Fe-Mo protein from oxidative damage. The sequence is that of Nitrogenase-stabilizing/protective protein NifW 1 from Trichormus variabilis (strain ATCC 29413 / PCC 7937) (Anabaena variabilis).